The chain runs to 191 residues: MSKNQLPSYQVVADEMKMATLAVTPAELHGLLAGLISGGLSQQDQSWQPMLFDYTNDGMGWPSAALEQAQALFNVTSAQLTSDEMVLNLLLPNAEGEEAIFALADALSDWVNHYISGLGLAGAAFNKASEEAKEALADLEEMARLGVDEDDDLQEQAELLEQVIEHVKACTLLIHAEFGAKTSSSETPTIH.

Belongs to the UPF0149 family.

The polypeptide is UPF0149 protein VV1_1551 (Vibrio vulnificus (strain CMCP6)).